A 79-amino-acid polypeptide reads, in one-letter code: UPF0291 protein lp_2062 (79 aa).

It belongs to the UPF0291 family.

It localises to the cytoplasm. This is UPF0291 protein lp_2062 from Lactiplantibacillus plantarum (strain ATCC BAA-793 / NCIMB 8826 / WCFS1) (Lactobacillus plantarum).